The primary structure comprises 2167 residues: Beige protein homolog 1 (2167 aa).

The region spanning 1368 to 1499 (KDNDSIATIW…VRDDVLRVLN (132 aa)) is the BEACH-type PH domain. One can recognise a BEACH domain in the interval 1545–1839 (SANNSLIDGF…QIFQEPHPEK (295 aa)). Lysine 1667 is covalently cross-linked (Glycyl lysine isopeptide (Lys-Gly) (interchain with G-Cter in ubiquitin)). 5 WD repeats span residues 1927–1965 (THMA…HSVS), 1976–2015 (GHLC…LVRQ), 2017–2054 (TNDA…YTSK), 2072–2111 (KLDA…HNEW), and 2129–2167 (SIKG…AIWY).

It localises to the cytoplasm. Its subcellular location is the membrane. In terms of biological role, may be involved in protein sorting and cell wall formation. The chain is Beige protein homolog 1 (BPH1) from Saccharomyces cerevisiae (strain ATCC 204508 / S288c) (Baker's yeast).